A 269-amino-acid chain; its full sequence is Formamidopyrimidine-DNA glycosylase (269 aa).

Pro2 functions as the Schiff-base intermediate with DNA in the catalytic mechanism. Glu3 acts as the Proton donor in catalysis. Lys58 acts as the Proton donor; for beta-elimination activity in catalysis. His91, Arg110, and Lys150 together coordinate DNA. The FPG-type zinc finger occupies 235 to 269 (SVYGCKNKKCYRCKGIIIKFVQNQRSTFYCKKCQT). Arg259 (proton donor; for delta-elimination activity) is an active-site residue.

This sequence belongs to the FPG family. Monomer. Requires Zn(2+) as cofactor.

The enzyme catalyses Hydrolysis of DNA containing ring-opened 7-methylguanine residues, releasing 2,6-diamino-4-hydroxy-5-(N-methyl)formamidopyrimidine.. The catalysed reaction is 2'-deoxyribonucleotide-(2'-deoxyribose 5'-phosphate)-2'-deoxyribonucleotide-DNA = a 3'-end 2'-deoxyribonucleotide-(2,3-dehydro-2,3-deoxyribose 5'-phosphate)-DNA + a 5'-end 5'-phospho-2'-deoxyribonucleoside-DNA + H(+). Its function is as follows. Involved in base excision repair of DNA damaged by oxidation or by mutagenic agents. Acts as a DNA glycosylase that recognizes and removes damaged bases. Has a preference for oxidized purines, such as 7,8-dihydro-8-oxoguanine (8-oxoG). Has AP (apurinic/apyrimidinic) lyase activity and introduces nicks in the DNA strand. Cleaves the DNA backbone by beta-delta elimination to generate a single-strand break at the site of the removed base with both 3'- and 5'-phosphates. The protein is Formamidopyrimidine-DNA glycosylase of Vesicomyosocius okutanii subsp. Calyptogena okutanii (strain HA).